A 1005-amino-acid polypeptide reads, in one-letter code: PH and SEC7 domain-containing protein 4 (1005 aa).

The segment at 27–66 (YPSEIHGHPGPSEPCQEHTCPFDPPESARPDAPHGNSGVE) is disordered. Ser85, Ser88, and Ser97 each carry phosphoserine. 4 disordered regions span residues 145 to 189 (PSKD…PGSS), 287 to 386 (LALG…NRGE), 407 to 525 (TSLL…SSSR), and 694 to 714 (EEDA…KISS). A compositionally biased stretch (acidic residues) spans 161 to 177 (EEDEDSGDDSSGPEEEN). Low complexity predominate over residues 350-361 (SQTSQSLSDLTQ). Ser381 and Ser435 each carry phosphoserine. Residues 428 to 438 (PVSSQDSSPRV) show a composition bias toward low complexity. Composition is skewed to basic and acidic residues over residues 453-465 (LQKD…SLKE) and 476-488 (QEAE…RSED). The SEC7 domain occupies 493 to 686 (QHHVHLASAE…KALYWSIRSE (194 aa)). In terms of domain architecture, PH spans 726–841 (PTYKQGILAR…WIARINLAAA (116 aa)). Residues 870 to 926 (SSLEEQHRSHENCLDAASDDLLDLQRNLPERRGRSRELEEYRLRKEYLEHEKTRYET) adopt a coiled-coil conformation. The interval 951–1005 (KETDGSQEPRPSLKKSHSSPSLHQEEAPTTAKVKRNISERRTYRKIIPKRNRNQL) is disordered. A phosphoserine mark is found at Ser968 and Ser971. The span at 992 to 1005 (TYRKIIPKRNRNQL) shows a compositional bias: basic residues.

The protein resides in the cell membrane. It localises to the cell projection. The protein localises to the ruffle membrane. Functionally, guanine nucleotide exchange factor for ARF6 and ARL14/ARF7. Through ARL14 activation, controls the movement of MHC class II-containing vesicles along the actin cytoskeleton in dendritic cells. Involved in membrane recycling. Interacts with several phosphatidylinositol phosphate species, including phosphatidylinositol 3,4-bisphosphate, phosphatidylinositol 3,5-bisphosphate and phosphatidylinositol 4,5-bisphosphate. This Mus musculus (Mouse) protein is PH and SEC7 domain-containing protein 4 (Psd4).